Consider the following 161-residue polypeptide: Large ribosomal subunit protein uL15 (161 aa).

The tract at residues 1–43 (MKLSDIADNAGSRKKRMRIGRGIGSGKGKTGGRGGKGQTARSG) is disordered. Residues 21–37 (RGIGSGKGKTGGRGGKG) are compositionally biased toward gly residues.

This sequence belongs to the universal ribosomal protein uL15 family. In terms of assembly, part of the 50S ribosomal subunit.

Binds to the 23S rRNA. The chain is Large ribosomal subunit protein uL15 from Nitrobacter hamburgensis (strain DSM 10229 / NCIMB 13809 / X14).